A 347-amino-acid polypeptide reads, in one-letter code: Holliday junction branch migration complex subunit RuvB (347 aa).

The large ATPase domain (RuvB-L) stretch occupies residues 1–186 (MKDENSISFL…FGITARFELY (186 aa)). ATP contacts are provided by residues leucine 25, arginine 26, glycine 67, lysine 70, threonine 71, threonine 72, 133-135 (EDY), arginine 176, tyrosine 186, and arginine 223. Threonine 71 serves as a coordination point for Mg(2+). Positions 187–257 (SEIELVEIIK…IVSIGLEMLR (71 aa)) are small ATPAse domain (RuvB-S). The tract at residues 260–347 (GEGLDEQDRN…GLNENQRVSF (88 aa)) is head domain (RuvB-H). DNA-binding residues include arginine 315 and arginine 320.

The protein belongs to the RuvB family. Homohexamer. Forms an RuvA(8)-RuvB(12)-Holliday junction (HJ) complex. HJ DNA is sandwiched between 2 RuvA tetramers; dsDNA enters through RuvA and exits via RuvB. An RuvB hexamer assembles on each DNA strand where it exits the tetramer. Each RuvB hexamer is contacted by two RuvA subunits (via domain III) on 2 adjacent RuvB subunits; this complex drives branch migration. In the full resolvosome a probable DNA-RuvA(4)-RuvB(12)-RuvC(2) complex forms which resolves the HJ.

It is found in the cytoplasm. It catalyses the reaction ATP + H2O = ADP + phosphate + H(+). Functionally, the RuvA-RuvB-RuvC complex processes Holliday junction (HJ) DNA during genetic recombination and DNA repair, while the RuvA-RuvB complex plays an important role in the rescue of blocked DNA replication forks via replication fork reversal (RFR). RuvA specifically binds to HJ cruciform DNA, conferring on it an open structure. The RuvB hexamer acts as an ATP-dependent pump, pulling dsDNA into and through the RuvAB complex. RuvB forms 2 homohexamers on either side of HJ DNA bound by 1 or 2 RuvA tetramers; 4 subunits per hexamer contact DNA at a time. Coordinated motions by a converter formed by DNA-disengaged RuvB subunits stimulates ATP hydrolysis and nucleotide exchange. Immobilization of the converter enables RuvB to convert the ATP-contained energy into a lever motion, pulling 2 nucleotides of DNA out of the RuvA tetramer per ATP hydrolyzed, thus driving DNA branch migration. The RuvB motors rotate together with the DNA substrate, which together with the progressing nucleotide cycle form the mechanistic basis for DNA recombination by continuous HJ branch migration. Branch migration allows RuvC to scan DNA until it finds its consensus sequence, where it cleaves and resolves cruciform DNA. The polypeptide is Holliday junction branch migration complex subunit RuvB (Borreliella burgdorferi (strain ATCC 35210 / DSM 4680 / CIP 102532 / B31) (Borrelia burgdorferi)).